The sequence spans 379 residues: Glucose-1-phosphate adenylyltransferase (379 aa).

Residues Gly-164, 179 to 180, and Ser-190 contribute to the alpha-D-glucose 1-phosphate site; that span reads EK.

Belongs to the bacterial/plant glucose-1-phosphate adenylyltransferase family. In terms of assembly, homotetramer.

It carries out the reaction alpha-D-glucose 1-phosphate + ATP + H(+) = ADP-alpha-D-glucose + diphosphate. The protein operates within glycan biosynthesis; glycogen biosynthesis. Involved in the biosynthesis of ADP-glucose, a building block required for the elongation reactions to produce glycogen. Catalyzes the reaction between ATP and alpha-D-glucose 1-phosphate (G1P) to produce pyrophosphate and ADP-Glc. This Streptococcus equi subsp. zooepidemicus (strain H70) protein is Glucose-1-phosphate adenylyltransferase.